The chain runs to 356 residues: Histidinol-phosphate aminotransferase (356 aa).

An N6-(pyridoxal phosphate)lysine modification is found at Lys210.

It belongs to the class-II pyridoxal-phosphate-dependent aminotransferase family. Histidinol-phosphate aminotransferase subfamily. As to quaternary structure, homodimer. Requires pyridoxal 5'-phosphate as cofactor.

The catalysed reaction is L-histidinol phosphate + 2-oxoglutarate = 3-(imidazol-4-yl)-2-oxopropyl phosphate + L-glutamate. It participates in amino-acid biosynthesis; L-histidine biosynthesis; L-histidine from 5-phospho-alpha-D-ribose 1-diphosphate: step 7/9. This is Histidinol-phosphate aminotransferase from Gluconacetobacter diazotrophicus (strain ATCC 49037 / DSM 5601 / CCUG 37298 / CIP 103539 / LMG 7603 / PAl5).